The following is a 127-amino-acid chain: Holo-[acyl-carrier-protein] synthase (127 aa).

Asp8 and Glu60 together coordinate Mg(2+).

It belongs to the P-Pant transferase superfamily. AcpS family. Mg(2+) is required as a cofactor.

It localises to the cytoplasm. The catalysed reaction is apo-[ACP] + CoA = holo-[ACP] + adenosine 3',5'-bisphosphate + H(+). Transfers the 4'-phosphopantetheine moiety from coenzyme A to a Ser of acyl-carrier-protein. In Marinomonas sp. (strain MWYL1), this protein is Holo-[acyl-carrier-protein] synthase.